Consider the following 79-residue polypeptide: Raniseptin-3 (79 aa).

A signal peptide spans 1–22; sequence MAFLKKSLFLVLFLGIVSLSIC. Positions 23-49 are excised as a propeptide; it reads EEEKREGEEEEKQEEENEELSEEELRE.

It belongs to the frog skin active peptide (FSAP) family. Dermaseptin subfamily. Expressed by the skin glands.

The protein localises to the secreted. In terms of biological role, has antibacterial activity. The protein is Raniseptin-3 of Boana raniceps (Chaco tree frog).